Reading from the N-terminus, the 444-residue chain is Pre-mRNA-splicing factor cwc25 (444 aa).

3 disordered regions span residues 1-27, 168-385, and 397-425; these read MGSG…QKAE, LASM…TDLD, and EAER…GFMS. Residues 19–65 are a coiled coil; the sequence is NVAATQKAEAEAIAERKKLQQRLQEIEEERRKEEIQKALEAAGGKRK. Residues 186-199 show a composition bias toward basic residues; sequence QRRHKHRSHHHRSD. 2 stretches are compositionally biased toward basic and acidic residues: residues 200–220 and 228–281; these read RHRD…DRDR and DSRD…DDRS. Over residues 282–293 the composition is skewed to basic residues; the sequence is RRHRFPQGRSRS. 3 stretches are compositionally biased toward basic and acidic residues: residues 305–344, 360–372, and 397–410; these read RREY…EQPK, DGDH…ERAK, and EAER…EKAR. The stretch at 364–417 forms a coiled coil; that stretch reads KNAEEERAKKLAAMQAAATDLDKAREERLKALAEAERAEREADEKARQQNKKFR.

It belongs to the CWC25 family. Associated with the spliceosome.

The protein localises to the nucleus. Involved in pre-mRNA splicing. The sequence is that of Pre-mRNA-splicing factor cwc25 (msp-6) from Neurospora crassa (strain ATCC 24698 / 74-OR23-1A / CBS 708.71 / DSM 1257 / FGSC 987).